Here is a 362-residue protein sequence, read N- to C-terminus: MDLINSLLNFVVPPASLLMLAFTWPTLFFITTCEWLYNTYLNSENMENKVVLITGASSGIGEQIAYQYAKRGANLVLVARREHRLRGISENARRLGAPNVLIMAADVVKEEECRRFINETINYYGRVDHLVNTVSLGHTFYFEEASDSSVFPILMDINFWGNVYPTYVALPYLRESNGRIIVNASVENWLPLPRMSLYSAAKSALINFYETLRFEVKNEVGITVATHGWIGTEMTRGKFMVEEGAEMQWKEEREVHVTGGPVEEFAKQIVSGACRGDPYVKYPSWYDIFFLYRVFAPKVLDWTFRFLLTNGGARRTSFIGTGRPLLETSSPRRSAVMEGSSPRRLPPGPLTFSPAFQQQKSE.

Residues 10–30 (FVVPPASLLMLAFTWPTLFFI) traverse the membrane as a helical; Signal-anchor for type II membrane protein segment. The Proline-knob signature appears at 13–26 (PPASLLMLAFTWPT). 55–81 (GASSGIGEQIAYQYAKRGANLVLVARR) contributes to the NADP(+) binding site. S185 lines the substrate pocket. The Proton acceptor role is filled by Y198. NADP(+) is bound by residues 198–202 (YSAAK) and K202. Positions 321 to 362 (TGRPLLETSSPRRSAVMEGSSPRRLPPGPLTFSPAFQQQKSE) are disordered.

This sequence belongs to the short-chain dehydrogenases/reductases (SDR) family. As to expression, expressed in seeds (at protein level). Not expressed in stem, leaf or root (at protein level).

The protein resides in the lipid droplet. It is found in the membrane. It carries out the reaction an 11beta-hydroxysteroid + NADP(+) = an 11-oxosteroid + NADPH + H(+). The catalysed reaction is corticosterone + NADP(+) = 11-dehydrocorticosterone + NADPH + H(+). It catalyses the reaction 17beta-estradiol + NADP(+) = estrone + NADPH + H(+). In terms of biological role, has dehydrogenase activity against corticosterone (11 beta-hydroxysteroid) and estradiol (17 beta-hydroxysteroid), with similar activities to both sterols in the presence of NADP(+), but negligible activity to either sterol in the presence of NAD(+). May be involved in signal transduction regulated by various sterols. The protein is 11-beta-hydroxysteroid dehydrogenase B of Sesamum indicum (Oriental sesame).